A 166-amino-acid chain; its full sequence is Disulfide bond reductase DsbH (166 aa).

The signal sequence occupies residues 1-22; it reads MKFWLQGCAFVGCLLLTLPCCA. Residues 32–166 form the Thioredoxin domain; sequence LQQTRPIAAA…SKVKSALKLR (135 aa). A disulfide bridge links Cys-72 with Cys-75. 73–74 is a binding site for substrate; the sequence is MW.

As to quaternary structure, monomer.

It is found in the periplasm. Catalyzes the reduction of disulfide bonds. May function in reducing intermolecular disulfides between proteins and small molecules in the periplasm, or keeping a specific subset of periplasmic proteins reduced, or maintaining the periplasm of Chlamydia in a generally reducing state. Seems to be unable to oxidize thiols into disulfides and does not display disulfide bond isomerase activity. The polypeptide is Disulfide bond reductase DsbH (dsbH) (Chlamydia pneumoniae (Chlamydophila pneumoniae)).